The chain runs to 1880 residues: Nonribosomal peptide synthetase otaB (1880 aa).

The tract at residues 205–594 (AQAVERGNSI…SVSFVGRRQA (390 aa)) is adenylation 1. Residues 728–804 (LPLSPLERQI…ELGAHLEQEA (77 aa)) enclose the Carrier domain. S765 is subject to O-(pantetheine 4'-phosphoryl)serine. The tract at residues 840 to 1250 (EDVYPCTALQ…LLSPQDQQQL (411 aa)) is condensation. Residues 1269–1665 (QRQCLAHPQK…GRKDRQVKLR (397 aa)) are adenylation 2.

It belongs to the NRP synthetase family.

The catalysed reaction is 7-carboxymellein + L-phenylalanine + ATP = ochratoxin B + ADP + phosphate + H(+). The protein operates within mycotoxin biosynthesis. In terms of biological role, nonribosomal peptide synthetase; part of the gene cluster that mediates the biosynthesis of ochratoxin A (OTA), a mycotoxin composed of a chlorinated type I polyketide dihydroisocoumarin moiety linked to L-phenylalanine, and demonstrated to have nephrotoxic, immunotoxic, genotoxic, neurotoxic, and teratogenic properties. OtaB is responsible for the linking of phenylalanine to the dihydroisocoumarin ring. The pathway begins with the highly reducing polyketide synthase otaA that catalyzes the formation of the isocoumarin group during the initial stages of biosynthesis, starting from one acetate and 4 malonate units, to originate the characteristic pentaketide skeleton 7-methylmellein (7-MM) of the OTA molecule. The newly identified cyclase otaY might be involved in the polyketide cyclization reaction during the initial steps of the OTA biosynthesis. 7-MM is then oxidized into 7-carboxymellein (also called ochratoxin beta) by the cytochrome P450 monooxygenase otaC. The NRPS encoded by the otaB gene is involved in the linking of phenylalanine to the dihydroisocoumarin ring. The reaction catalyzed by NRPS results in the production of ochratoxin B (OTB), which is the non-chlorinated analog of OTA and which subsequently serves as the substrate of the halogenase otaD for chlorination activity to form the final molecular structure of OTA, containing a chlorine atom in the C-5 position of the molecule. This chain is Nonribosomal peptide synthetase otaB, found in Aspergillus niger (strain ATCC MYA-4892 / CBS 513.88 / FGSC A1513).